The sequence spans 204 residues: ATP phosphoribosyltransferase (204 aa).

It belongs to the ATP phosphoribosyltransferase family. Short subfamily. In terms of assembly, heteromultimer composed of HisG and HisZ subunits.

The protein resides in the cytoplasm. It carries out the reaction 1-(5-phospho-beta-D-ribosyl)-ATP + diphosphate = 5-phospho-alpha-D-ribose 1-diphosphate + ATP. It participates in amino-acid biosynthesis; L-histidine biosynthesis; L-histidine from 5-phospho-alpha-D-ribose 1-diphosphate: step 1/9. Functionally, catalyzes the condensation of ATP and 5-phosphoribose 1-diphosphate to form N'-(5'-phosphoribosyl)-ATP (PR-ATP). Has a crucial role in the pathway because the rate of histidine biosynthesis seems to be controlled primarily by regulation of HisG enzymatic activity. The polypeptide is ATP phosphoribosyltransferase (Staphylococcus aureus (strain bovine RF122 / ET3-1)).